A 327-amino-acid chain; its full sequence is HTH-type transcriptional regulator EbgR (327 aa).

Positions 1–57 (MATLKDIAIEAGVSLATVSRVLNDDPTLNVKEETKHRILEIAEKLEYKTSSARKLQT) constitute an HTH lacI-type domain. Residues 4 to 23 (LKDIAIEAGVSLATVSRVLN) constitute a DNA-binding region (H-T-H motif).

Functionally, repressor for beta galactosidase alpha and beta subunits (ebgA and ebgC). Binds lactose as an inducer. The polypeptide is HTH-type transcriptional regulator EbgR (ebgR) (Escherichia coli (strain K12)).